The following is a 390-amino-acid chain: Flagellar P-ring protein (390 aa).

Positions 1-25 are cleaved as a signal peptide; it reads MLLKKIFLTGIIVLDLVFFVSYGFA.

Belongs to the FlgI family. As to quaternary structure, the basal body constitutes a major portion of the flagellar organelle and consists of four rings (L,P,S, and M) mounted on a central rod.

It localises to the periplasm. Its subcellular location is the bacterial flagellum basal body. Its function is as follows. Assembles around the rod to form the L-ring and probably protects the motor/basal body from shearing forces during rotation. This chain is Flagellar P-ring protein, found in Syntrophus aciditrophicus (strain SB).